Here is a 290-residue protein sequence, read N- to C-terminus: Ribosome-inactivating protein bryodin I (290 aa).

An N-terminal signal peptide occupies residues 1-23; the sequence is MIKLLVLWLLILTIFLKSPTVEG. Active-site residues include glutamate 183 and glutamate 212. N-linked (GlcNAc...) asparagine glycans are attached at residues asparagine 214 and asparagine 250. A propeptide spans 271-290 (removed in mature form); it reads AIGEDISMTLIGFEHGLYGI.

It belongs to the ribosome-inactivating protein family. Type 1 RIP subfamily. Appears to undergo proteolytic cleavage in the C-terminal to produce a shorter protein.

It carries out the reaction Endohydrolysis of the N-glycosidic bond at one specific adenosine on the 28S rRNA.. Its function is as follows. Ribosome-inactivating protein of type 1, inhibits protein synthesis in animal cells. This chain is Ribosome-inactivating protein bryodin I, found in Bryonia dioica (Red bryony).